The primary structure comprises 237 residues: Endonuclease NucS (237 aa).

Belongs to the NucS endonuclease family.

It is found in the cytoplasm. In terms of biological role, cleaves both 3' and 5' ssDNA extremities of branched DNA structures. The polypeptide is Endonuclease NucS (Saccharolobus islandicus (strain L.S.2.15 / Lassen #1) (Sulfolobus islandicus)).